A 297-amino-acid polypeptide reads, in one-letter code: UTP--glucose-1-phosphate uridylyltransferase (297 aa).

Belongs to the UDPGP type 2 family.

The catalysed reaction is alpha-D-glucose 1-phosphate + UTP + H(+) = UDP-alpha-D-glucose + diphosphate. Its pathway is carbohydrate metabolism; nucleotide-sugar metabolism. It functions in the pathway bacterial outer membrane biogenesis; lipopolysaccharide biosynthesis. This is UTP--glucose-1-phosphate uridylyltransferase (galF) from Escherichia coli O157:H7.